A 139-amino-acid chain; its full sequence is Putative pre-16S rRNA nuclease (139 aa).

It belongs to the YqgF nuclease family.

Its subcellular location is the cytoplasm. Its function is as follows. Could be a nuclease involved in processing of the 5'-end of pre-16S rRNA. This chain is Putative pre-16S rRNA nuclease, found in Streptococcus pyogenes serotype M49 (strain NZ131).